The primary structure comprises 252 residues: 5-oxoprolinase subunit A (252 aa).

Belongs to the LamB/PxpA family. Forms a complex composed of PxpA, PxpB and PxpC.

The enzyme catalyses 5-oxo-L-proline + ATP + 2 H2O = L-glutamate + ADP + phosphate + H(+). Functionally, catalyzes the cleavage of 5-oxoproline to form L-glutamate coupled to the hydrolysis of ATP to ADP and inorganic phosphate. The polypeptide is 5-oxoprolinase subunit A (Mycobacterium leprae (strain Br4923)).